The chain runs to 650 residues: Acetyl-coenzyme A synthetase (650 aa).

Residues 190 to 193 (RGGR), Thr-308, and Asn-332 each bind CoA. ATP contacts are provided by residues 384-386 (GEP), 408-413 (DTWWQT), Asp-497, and Arg-512. Ser-520 is a binding site for CoA. ATP is bound at residue Arg-523. Val-534, His-536, and Val-539 together coordinate Mg(2+). A CoA-binding site is contributed by Arg-581. Lys-606 bears the N6-acetyllysine mark.

Belongs to the ATP-dependent AMP-binding enzyme family. Requires Mg(2+) as cofactor. Post-translationally, acetylated. Deacetylation by the SIR2-homolog deacetylase activates the enzyme.

It catalyses the reaction acetate + ATP + CoA = acetyl-CoA + AMP + diphosphate. In terms of biological role, catalyzes the conversion of acetate into acetyl-CoA (AcCoA), an essential intermediate at the junction of anabolic and catabolic pathways. AcsA undergoes a two-step reaction. In the first half reaction, AcsA combines acetate with ATP to form acetyl-adenylate (AcAMP) intermediate. In the second half reaction, it can then transfer the acetyl group from AcAMP to the sulfhydryl group of CoA, forming the product AcCoA. This is Acetyl-coenzyme A synthetase from Bradyrhizobium sp. (strain ORS 278).